The sequence spans 375 residues: MTEEYFIQGNDACARGAISAGCRFFAGYPITPSTEIAEEMAVLLPGEGGVFVQMEDEIGALGAVIGAVWGGVKGMTATSGPGFSLMQEHVGYAAMTETPLVIVDVQRGSPSTGQPTMASQSDMMQARWGSHGDYEIIALSPSSVQECFDFTVRAFNLAEEYRVPVVVLSDEIVGHMREKITIPDKVEIRKRKSPTSPPGEFIPFKPQGDFVPEMPAFGDGYRVPVTGLTHDERGYPDASNPEGHEKLVKRLCDKILNHRDKIVDVQKGWTDDADITVISYGAPSRSVATAVKMARSEGVRAGYIKINTPWPFPETEIREAAESSRKLLVVEMNLGQMFYEVQRVASGMAEVELLPKIGGEIHRPDEILNKIMGMK.

Heterotetramer of the KorA, KorB, KorC and KorD subunits.

The enzyme catalyses 2 oxidized [2Fe-2S]-[ferredoxin] + 2-oxoglutarate + CoA = succinyl-CoA + 2 reduced [2Fe-2S]-[ferredoxin] + CO2 + H(+). This chain is 2-oxoglutarate synthase subunit KorA (korA), found in Methanothermobacter marburgensis (strain ATCC BAA-927 / DSM 2133 / JCM 14651 / NBRC 100331 / OCM 82 / Marburg) (Methanobacterium thermoautotrophicum).